A 230-amino-acid polypeptide reads, in one-letter code: Orotidine 5'-phosphate decarboxylase (230 aa).

Substrate is bound by residues Asp11, Lys34, 61–70 (DLKLHDIPNT), Thr117, Arg179, Gln188, Gly208, and Arg209. The active-site Proton donor is the Lys63.

It belongs to the OMP decarboxylase family. Type 1 subfamily. As to quaternary structure, homodimer.

The enzyme catalyses orotidine 5'-phosphate + H(+) = UMP + CO2. The protein operates within pyrimidine metabolism; UMP biosynthesis via de novo pathway; UMP from orotate: step 2/2. Catalyzes the decarboxylation of orotidine 5'-monophosphate (OMP) to uridine 5'-monophosphate (UMP). The chain is Orotidine 5'-phosphate decarboxylase from Streptococcus sanguinis (strain SK36).